An 88-amino-acid polypeptide reads, in one-letter code: Kunitz-type conkunitzin-B1 (88 aa).

A signal peptide spans 1-23 (MEGRRFAAVLILPICMLAPGAVA). Positions 33–83 (CNLPAESGTGTQSLKRFYYNSDKMQCRTFIYKGNGGNDNNFPRTYDCQKKC) constitute a BPTI/Kunitz inhibitor domain. 2 disulfides stabilise this stretch: Cys33–Cys83 and Cys58–Cys79. A Proline amide modification is found at Pro87.

It belongs to the venom Kunitz-type family. In terms of processing, contains 2 disulfide bonds instead of 3, as for all Kunitz domain proteins. As to expression, expressed by the venom duct.

The protein localises to the secreted. Its function is as follows. Blocks specifically voltage-activated potassium channels (Kv) of the Shaker family. This Conus bullatus (Bubble cone) protein is Kunitz-type conkunitzin-B1.